The primary structure comprises 964 residues: Translation initiation factor IF-2 (964 aa).

Residues Ala-105–Val-119 are compositionally biased toward low complexity. 2 disordered regions span residues Ala-105–Arg-133 and Lys-146–Pro-378. 4 stretches are compositionally biased toward basic and acidic residues: residues Glu-123 to Arg-133, Lys-146 to Glu-183, Glu-197 to Arg-253, and Pro-266 to Glu-278. Positions Lys-288 to Ala-302 are enriched in low complexity. Residues Ala-303–Gly-313 show a composition bias toward pro residues. The tr-type G domain maps to Thr-464–Lys-633. The G1 stretch occupies residues Gly-473–Thr-480. Residue Gly-473–Thr-480 coordinates GTP. A G2 region spans residues Gly-498–His-502. Residues Asp-519–Gly-522 are G3. GTP is bound by residues Asp-519–His-523 and Thr-573–Asp-576. Positions Thr-573–Asp-576 are G4. Residues Ser-609–Lys-611 are G5.

It belongs to the TRAFAC class translation factor GTPase superfamily. Classic translation factor GTPase family. IF-2 subfamily.

It is found in the cytoplasm. Functionally, one of the essential components for the initiation of protein synthesis. Protects formylmethionyl-tRNA from spontaneous hydrolysis and promotes its binding to the 30S ribosomal subunits. Also involved in the hydrolysis of GTP during the formation of the 70S ribosomal complex. The chain is Translation initiation factor IF-2 from Ralstonia pickettii (strain 12J).